The primary structure comprises 153 residues: ORM1-like protein 2 (153 aa).

Topologically, residues 1–21 (MNVGVAHSEVNPNTRVMNSRG) are cytoplasmic. Transmembrane regions (helical) follow at residues 22 to 42 (IWLA…SIPF) and 43 to 63 (FSIP…MYVF). At 64–105 (LHTVKGTPFETPDQGKARLLTHWEQMDYGLQFTSSRKFLSIS) the chain is on the cytoplasmic side. A helical transmembrane segment spans residues 106 to 126 (PIVLYLLASFYTKYDAAHFLI). The Extracellular portion of the chain corresponds to 127 to 153 (NTASLLSVLLPKLPQFHGVRLFGINKY).

The protein belongs to the ORM family. Ceramide-sensitive subunit of the serine palmitoyltransferase (SPT) complex, which is also composed of SPTLC1, SPTLC2/3 and SPTSSA/B.

Its subcellular location is the endoplasmic reticulum membrane. Its function is as follows. Plays an essential role in the homeostatic regulation of sphingolipid de novo biosynthesis by modulating the activity of the serine palmitoyltransferase (SPT) in response to ceramide levels. When complexed to SPT, the binding of ceramides to its N-terminus stabilizes a conformation that block SPT substrate entry, hence preventing SPT catalytic activity. Through this mechanism, maintains ceramide levels at sufficient concentrations for the production of complex sphingolipids, but which prevents the accumulation of ceramides to levels that trigger apoptosis. The protein is ORM1-like protein 2 (ORMDL2) of Bos taurus (Bovine).